Here is a 470-residue protein sequence, read N- to C-terminus: 24-hydroxycholesterol 7-alpha-hydroxylase (470 aa).

A run of 2 helical transmembrane segments spans residues 3–23 (IMELFSPIAIAVLGSCVLFLF) and 270–290 (VVLWAALANAPPIAFWTLGYI). Residue Cys415 participates in heme binding.

It belongs to the cytochrome P450 family. Requires heme as cofactor. In terms of tissue distribution, liver specific. Hepatic expression is sexually dimorphic (female &gt; male).

It is found in the endoplasmic reticulum membrane. The protein localises to the microsome membrane. The enzyme catalyses (24S)-hydroxycholesterol + reduced [NADPH--hemoprotein reductase] + O2 = (24S)-7alpha-dihydroxycholesterol + oxidized [NADPH--hemoprotein reductase] + H2O + H(+). It functions in the pathway steroid metabolism; cholesterol degradation. The protein operates within lipid metabolism; bile acid biosynthesis. A cytochrome P450 monooxygenase involved in neural cholesterol clearance through bile acid synthesis. Catalyzes 7-alpha hydroxylation of (24S)-hydroxycholesterol, a neural oxysterol that is metabolized to bile acids in the liver. Mechanistically, uses molecular oxygen inserting one oxygen atom into a substrate, and reducing the second into a water molecule, with two electrons provided by NADPH via cytochrome P450 reductase (CPR; NADPH-ferrihemoprotein reductase). This is 24-hydroxycholesterol 7-alpha-hydroxylase (Cyp39a1) from Mus musculus (Mouse).